A 349-amino-acid polypeptide reads, in one-letter code: Hydroxymethylglutaryl-CoA synthase (349 aa).

(3S)-3-hydroxy-3-methylglutaryl-CoA is bound by residues Asp-30 and Ala-31. The active-site Proton donor/acceptor is Glu-82. 2 residues coordinate (3S)-3-hydroxy-3-methylglutaryl-CoA: Cys-114 and Thr-155. The active-site Acyl-thioester intermediate is Cys-114. Arg-203 provides a ligand contact to CoA. Positions 205 and 238 each coordinate (3S)-3-hydroxy-3-methylglutaryl-CoA. Residue His-238 is the Proton donor/acceptor of the active site. Lys-243 is a binding site for CoA. (3S)-3-hydroxy-3-methylglutaryl-CoA is bound by residues Asn-270 and Ser-300.

The protein belongs to the thiolase-like superfamily. Archaeal HMG-CoA synthase family. Interacts with acetoacetyl-CoA thiolase that catalyzes the precedent step in the pathway and with a DUF35 protein. The acetoacetyl-CoA thiolase/HMG-CoA synthase complex channels the intermediate via a fused CoA-binding site, which allows for efficient coupling of the endergonic thiolase reaction with the exergonic HMGCS reaction.

It catalyses the reaction acetoacetyl-CoA + acetyl-CoA + H2O = (3S)-3-hydroxy-3-methylglutaryl-CoA + CoA + H(+). The protein operates within metabolic intermediate biosynthesis; (R)-mevalonate biosynthesis; (R)-mevalonate from acetyl-CoA: step 2/3. Catalyzes the condensation of acetyl-CoA with acetoacetyl-CoA to form 3-hydroxy-3-methylglutaryl-CoA (HMG-CoA). Functions in the mevalonate (MVA) pathway leading to isopentenyl diphosphate (IPP), a key precursor for the biosynthesis of isoprenoid compounds that are building blocks of archaeal membrane lipids. In Methanococcus maripaludis (strain C7 / ATCC BAA-1331), this protein is Hydroxymethylglutaryl-CoA synthase.